The sequence spans 252 residues: MNKLQNIRGVAFDLDGTLVDSAPGLAAAVDMALYALELPVAGEERVITWIGNGADVLMERALTWARQERATLRKTMGKPPVDEDIPAEEQVRILRKLFDRYYGEVAEEGTFLFPHVADTLGALHASGLSLGLVTNKPTPFVAPLLESLDIAKYFSVVIGGDDVQNKKPHPEPLLLVASRLGMTPEQMLFVGDSRNDIQAAKAAGCPSVGLTYGYNYGEAIALSEPDVIYDSFNDLLPALGLPHSDNQEIKND.

Residue D13 is the Nucleophile of the active site. Mg(2+) is bound by residues D13, D15, and D192.

The protein belongs to the HAD-like hydrolase superfamily. CbbY/CbbZ/Gph/YieH family. As to quaternary structure, monomer. Requires Mg(2+) as cofactor. Chloride is required as a cofactor.

It catalyses the reaction 2-phosphoglycolate + H2O = glycolate + phosphate. Its pathway is organic acid metabolism; glycolate biosynthesis; glycolate from 2-phosphoglycolate: step 1/1. Functionally, specifically catalyzes the dephosphorylation of 2-phosphoglycolate. Is involved in the dissimilation of the intracellular 2-phosphoglycolate formed during the DNA repair of 3'-phosphoglycolate ends, a major class of DNA lesions induced by oxidative stress. This chain is Phosphoglycolate phosphatase, found in Salmonella paratyphi A (strain ATCC 9150 / SARB42).